The chain runs to 377 residues: Nitric oxide reductase FlRd-NAD(+) reductase (377 aa).

It belongs to the FAD-dependent oxidoreductase family. FAD serves as cofactor.

The protein localises to the cytoplasm. It carries out the reaction 2 reduced [nitric oxide reductase rubredoxin domain] + NAD(+) + H(+) = 2 oxidized [nitric oxide reductase rubredoxin domain] + NADH. The protein operates within nitrogen metabolism; nitric oxide reduction. Its function is as follows. One of at least two accessory proteins for anaerobic nitric oxide (NO) reductase. Reduces the rubredoxin moiety of NO reductase. In Escherichia coli O45:K1 (strain S88 / ExPEC), this protein is Nitric oxide reductase FlRd-NAD(+) reductase.